The primary structure comprises 281 residues: NAD-dependent protein deacetylase 1 (281 aa).

Positions 1–281 (MEEGAALEGV…FDQILDALDL (281 aa)) constitute a Deacetylase sirtuin-type domain. NAD(+) is bound by residues 24–44 (GAGV…GSLN) and 102–105 (QNVD). Residue histidine 120 is the Proton acceptor of the active site. Positions 128, 131, 183, and 186 each coordinate Zn(2+). NAD(+)-binding positions include 224-226 (GSS), 250-252 (NGG), and valine 268.

This sequence belongs to the sirtuin family. Class II subfamily. Zn(2+) is required as a cofactor.

It localises to the cytoplasm. It carries out the reaction N(6)-acetyl-L-lysyl-[protein] + NAD(+) + H2O = 2''-O-acetyl-ADP-D-ribose + nicotinamide + L-lysyl-[protein]. Functionally, NAD-dependent protein deacetylase which modulates the activities of several enzymes which are inactive in their acetylated form. The sequence is that of NAD-dependent protein deacetylase 1 from Corynebacterium efficiens (strain DSM 44549 / YS-314 / AJ 12310 / JCM 11189 / NBRC 100395).